The sequence spans 248 residues: ATP synthase subunit a, chloroplastic (248 aa).

Helical transmembrane passes span 96 to 116 (VPFI…GALL), 135 to 155 (INTT…AGLY), 200 to 220 (LVVA…MMLL), and 221 to 241 (GLFT…AYIG).

The protein belongs to the ATPase A chain family. F-type ATPases have 2 components, CF(1) - the catalytic core - and CF(0) - the membrane proton channel. CF(1) has five subunits: alpha(3), beta(3), gamma(1), delta(1), epsilon(1). CF(0) has four main subunits: a, b, b' and c.

Its subcellular location is the plastid. The protein resides in the chloroplast thylakoid membrane. Functionally, key component of the proton channel; it plays a direct role in the translocation of protons across the membrane. This is ATP synthase subunit a, chloroplastic from Adiantum capillus-veneris (Maidenhair fern).